A 501-amino-acid polypeptide reads, in one-letter code: L-arabinose isomerase (501 aa).

Glu-306, Glu-333, His-350, and His-450 together coordinate Mn(2+).

Belongs to the arabinose isomerase family. In terms of assembly, homohexamer. The cofactor is Mn(2+).

The catalysed reaction is beta-L-arabinopyranose = L-ribulose. Its pathway is carbohydrate degradation; L-arabinose degradation via L-ribulose; D-xylulose 5-phosphate from L-arabinose (bacterial route): step 1/3. Catalyzes the conversion of L-arabinose to L-ribulose. The protein is L-arabinose isomerase of Pectobacterium carotovorum subsp. carotovorum (strain PC1).